The sequence spans 314 residues: MPITLDKKLPAVDILKSENIFVMDDKRAIHQDIRPMSILILNLMPTKVATETQLLRLLANTPLQLSVDFLYMTSHHSKTTQAEHMKTFYKTFKDIKDNYYDGLIITGAPVETMPFEKVDYWEELCQVFQWSKTHVYSTLHLCWGAQAGLYYRYSVDKVQMTDKLSGIYLQKVNEQLSPLMRGFDDCFLSPHSRYTEVLLKDINNKTNLEILASGEKVGLSILASRDMREVYSFGHLEYDRETLDNEYKRDLKAGKSPKIPENYYQDDDVTTHPIMRWNLAAATFFSNWINYAVYQETPYRLEELEKDISFYGYL.

Cys-142 functions as the Acyl-thioester intermediate in the catalytic mechanism. 2 residues coordinate substrate: Lys-163 and Ser-192. The active-site Proton acceptor is the His-235. Glu-237 is a catalytic residue. Arg-249 serves as a coordination point for substrate.

The protein belongs to the MetA family.

It localises to the cytoplasm. It catalyses the reaction L-homoserine + acetyl-CoA = O-acetyl-L-homoserine + CoA. The protein operates within amino-acid biosynthesis; L-methionine biosynthesis via de novo pathway; O-acetyl-L-homoserine from L-homoserine: step 1/1. In terms of biological role, transfers an acetyl group from acetyl-CoA to L-homoserine, forming acetyl-L-homoserine. The protein is Homoserine O-acetyltransferase of Streptococcus mutans serotype c (strain ATCC 700610 / UA159).